Reading from the N-terminus, the 613-residue chain is Proline--tRNA ligase (613 aa).

It belongs to the class-II aminoacyl-tRNA synthetase family. ProS type 1 subfamily. As to quaternary structure, homodimer.

The protein localises to the cytoplasm. The enzyme catalyses tRNA(Pro) + L-proline + ATP = L-prolyl-tRNA(Pro) + AMP + diphosphate. In terms of biological role, catalyzes the attachment of proline to tRNA(Pro) in a two-step reaction: proline is first activated by ATP to form Pro-AMP and then transferred to the acceptor end of tRNA(Pro). As ProRS can inadvertently accommodate and process non-cognate amino acids such as alanine and cysteine, to avoid such errors it has two additional distinct editing activities against alanine. One activity is designated as 'pretransfer' editing and involves the tRNA(Pro)-independent hydrolysis of activated Ala-AMP. The other activity is designated 'posttransfer' editing and involves deacylation of mischarged Ala-tRNA(Pro). The misacylated Cys-tRNA(Pro) is not edited by ProRS. The chain is Proline--tRNA ligase from Cyanothece sp. (strain PCC 7425 / ATCC 29141).